The sequence spans 300 residues: 33 kDa chaperonin (300 aa).

Intrachain disulfides connect C247-C249 and C280-C283.

This sequence belongs to the HSP33 family. In terms of processing, under oxidizing conditions two disulfide bonds are formed involving the reactive cysteines. Under reducing conditions zinc is bound to the reactive cysteines and the protein is inactive.

The protein localises to the cytoplasm. Redox regulated molecular chaperone. Protects both thermally unfolding and oxidatively damaged proteins from irreversible aggregation. Plays an important role in the bacterial defense system toward oxidative stress. In Prochlorococcus marinus subsp. pastoris (strain CCMP1986 / NIES-2087 / MED4), this protein is 33 kDa chaperonin.